The primary structure comprises 134 residues: Large ribosomal subunit protein eL32 (134 aa).

Belongs to the eukaryotic ribosomal protein eL32 family.

The chain is Large ribosomal subunit protein eL32 (rpl32e) from Picrophilus torridus (strain ATCC 700027 / DSM 9790 / JCM 10055 / NBRC 100828 / KAW 2/3).